The sequence spans 1050 residues: RecBCD enzyme subunit RecB (1050 aa).

Positions 1–443 constitute a UvrD-like helicase ATP-binding domain; that stretch reads MKPFNIFDSN…LQLVNNYRST (443 aa). The tract at residues 1–766 is DNA-binding and helicase activity, interacts with RecC; sequence MKPFNIFDSN…TNYVKLEGTQ (766 aa). Position 21 to 28 (21 to 28) interacts with ATP; it reads ASAGTGKT. One can recognise a UvrD-like helicase C-terminal domain in the interval 458–701; it reads SPFLEIPGYL…KITTIHSSKG (244 aa). The segment at 814-1050 is nuclease activity, interacts with RecD and RecA; the sequence is PKTIFSFSST…KAIQKCQAYH (237 aa). Mg(2+) contacts are provided by H859, D945, and D958. D958 functions as the For nuclease activity in the catalytic mechanism.

This sequence belongs to the helicase family. UvrD subfamily. In terms of assembly, heterotrimer of RecB, RecC and RecD. All subunits contribute to DNA-binding. Interacts with RecA. Mg(2+) is required as a cofactor.

The catalysed reaction is Exonucleolytic cleavage (in the presence of ATP) in either 5'- to 3'- or 3'- to 5'-direction to yield 5'-phosphooligonucleotides.. It carries out the reaction Couples ATP hydrolysis with the unwinding of duplex DNA by translocating in the 3'-5' direction.. The enzyme catalyses ATP + H2O = ADP + phosphate + H(+). In terms of biological role, a helicase/nuclease that prepares dsDNA breaks (DSB) for recombinational DNA repair. Binds to DSBs and unwinds DNA via a highly rapid and processive ATP-dependent bidirectional helicase activity. Unwinds dsDNA until it encounters a Chi (crossover hotspot instigator) sequence from the 3' direction. Cuts ssDNA a few nucleotides 3' to the Chi site. The properties and activities of the enzyme are changed at Chi. The Chi-altered holoenzyme produces a long 3'-ssDNA overhang and facilitates RecA-binding to the ssDNA for homologous DNA recombination and repair. Holoenzyme degrades any linearized DNA that is unable to undergo homologous recombination. In the holoenzyme this subunit contributes ATPase, 3'-5' helicase, exonuclease activity and loads RecA onto ssDNA. The polypeptide is RecBCD enzyme subunit RecB (Chlamydia pneumoniae (Chlamydophila pneumoniae)).